The chain runs to 92 residues: Small ribosomal subunit protein uS19 (92 aa).

It belongs to the universal ribosomal protein uS19 family.

In terms of biological role, protein S19 forms a complex with S13 that binds strongly to the 16S ribosomal RNA. This is Small ribosomal subunit protein uS19 from Aeromonas hydrophila subsp. hydrophila (strain ATCC 7966 / DSM 30187 / BCRC 13018 / CCUG 14551 / JCM 1027 / KCTC 2358 / NCIMB 9240 / NCTC 8049).